Reading from the N-terminus, the 891-residue chain is Translation initiation factor IF-2 (891 aa).

The disordered stretch occupies residues 50-303 (KKEHGSADES…TSMQHGFDKS (254 aa)). Basic and acidic residues-rich tracts occupy residues 102 to 237 (TLEE…KTAD) and 245 to 261 (HAREAEDAADRKDEQQP). Residues 390-559 (GRAPVVTIMG…LLQSEVLELT (170 aa)) form the tr-type G domain. The G1 stretch occupies residues 399 to 406 (GHVDHGKT). 399 to 406 (GHVDHGKT) is a binding site for GTP. Residues 424-428 (GITQH) are G2. Residues 445–448 (DTPG) are G3. Residues 445–449 (DTPGH) and 499–502 (NKID) contribute to the GTP site. Positions 499 to 502 (NKID) are G4. The G5 stretch occupies residues 535–537 (SAK).

It belongs to the TRAFAC class translation factor GTPase superfamily. Classic translation factor GTPase family. IF-2 subfamily.

It is found in the cytoplasm. One of the essential components for the initiation of protein synthesis. Protects formylmethionyl-tRNA from spontaneous hydrolysis and promotes its binding to the 30S ribosomal subunits. Also involved in the hydrolysis of GTP during the formation of the 70S ribosomal complex. The sequence is that of Translation initiation factor IF-2 from Aliivibrio salmonicida (strain LFI1238) (Vibrio salmonicida (strain LFI1238)).